A 286-amino-acid chain; its full sequence is NAD kinase (286 aa).

D74 functions as the Proton acceptor in the catalytic mechanism. Residues 74 to 75 (DG), 148 to 149 (ND), D178, A186, 189 to 194 (TAYNLS), and Q244 each bind NAD(+).

It belongs to the NAD kinase family. The cofactor is a divalent metal cation.

It is found in the cytoplasm. It carries out the reaction NAD(+) + ATP = ADP + NADP(+) + H(+). Involved in the regulation of the intracellular balance of NAD and NADP, and is a key enzyme in the biosynthesis of NADP. Catalyzes specifically the phosphorylation on 2'-hydroxyl of the adenosine moiety of NAD to yield NADP. This chain is NAD kinase, found in Campylobacter jejuni subsp. jejuni serotype O:2 (strain ATCC 700819 / NCTC 11168).